The sequence spans 535 residues: Arylsulfatase K (535 aa).

Residues M1–C21 form the signal peptide. 2 residues coordinate Ca(2+): D41 and C81. C81 serves as the catalytic Nucleophile. 3-oxoalanine (Cys) is present on C81. K129 is a substrate binding site. N194 is a glycosylation site (N-linked (GlcNAc...) asparagine). Residue H252 participates in substrate binding. The N-linked (GlcNAc...) asparagine glycan is linked to N263. Ca(2+) contacts are provided by D314 and H315. N-linked (GlcNAc...) asparagine glycosylation is found at N376, N414, and N499.

This sequence belongs to the sulfatase family. The cofactor is Ca(2+). The conversion to 3-oxoalanine (also known as C-formylglycine, FGly), of a serine or cysteine residue in prokaryotes and of a cysteine residue in eukaryotes, is critical for catalytic activity.

The protein localises to the secreted. It localises to the lysosome. It carries out the reaction an aryl sulfate + H2O = a phenol + sulfate + H(+). The catalysed reaction is Hydrolysis of the 2-sulfate groups of the 2-O-sulfo-D-glucuronate residues of chondroitin sulfate, heparin and heparitin sulfate.. Functionally, catalyzes the hydrolysis of pseudosubstrates such as p-nitrocatechol sulfate and p-nitrophenyl sulfate. Catalyzes the hydrolysis of the 2-sulfate groups of the 2-O-sulfo-D-glucuronate residues of chondroitin sulfate, heparin and heparitin sulfate. Acts selectively on 2-sulfoglucuronate and lacks activity against 2-sulfoiduronate. The sequence is that of Arylsulfatase K (ARSK) from Gallus gallus (Chicken).